The chain runs to 907 residues: DNA mismatch repair protein MutS (907 aa).

656-663 (GPNMAGKS) contacts ATP.

Belongs to the DNA mismatch repair MutS family.

Functionally, this protein is involved in the repair of mismatches in DNA. It is possible that it carries out the mismatch recognition step. This protein has a weak ATPase activity. In Nitrobacter hamburgensis (strain DSM 10229 / NCIMB 13809 / X14), this protein is DNA mismatch repair protein MutS.